A 212-amino-acid chain; its full sequence is Pyridoxine/pyridoxamine 5'-phosphate oxidase (212 aa).

Residues 8 to 11 and lysine 66 each bind substrate; that span reads RREY. Residues 61 to 66, 76 to 77, arginine 82, lysine 83, and glutamine 105 each bind FMN; these read RIVLLK and FT. Substrate is bound by residues tyrosine 123, arginine 127, and serine 131. FMN contacts are provided by residues 140 to 141 and tryptophan 185; that span reads QS. Substrate is bound at residue 191-193; the sequence is RLH. Position 195 (arginine 195) interacts with FMN.

This sequence belongs to the pyridoxamine 5'-phosphate oxidase family. Homodimer. FMN serves as cofactor.

It carries out the reaction pyridoxamine 5'-phosphate + O2 + H2O = pyridoxal 5'-phosphate + H2O2 + NH4(+). The enzyme catalyses pyridoxine 5'-phosphate + O2 = pyridoxal 5'-phosphate + H2O2. Its pathway is cofactor metabolism; pyridoxal 5'-phosphate salvage; pyridoxal 5'-phosphate from pyridoxamine 5'-phosphate: step 1/1. It functions in the pathway cofactor metabolism; pyridoxal 5'-phosphate salvage; pyridoxal 5'-phosphate from pyridoxine 5'-phosphate: step 1/1. In terms of biological role, catalyzes the oxidation of either pyridoxine 5'-phosphate (PNP) or pyridoxamine 5'-phosphate (PMP) into pyridoxal 5'-phosphate (PLP). The chain is Pyridoxine/pyridoxamine 5'-phosphate oxidase from Shewanella halifaxensis (strain HAW-EB4).